The chain runs to 114 residues: Hydrogenase maturation factor HypA (114 aa).

Position 2 (His2) interacts with Ni(2+). The Zn(2+) site is built by Cys73, Cys76, Cys89, and Cys92.

The protein belongs to the HypA/HybF family.

In terms of biological role, involved in the maturation of [NiFe] hydrogenases. Required for nickel insertion into the metal center of the hydrogenase. This chain is Hydrogenase maturation factor HypA, found in Caldanaerobacter subterraneus subsp. tengcongensis (strain DSM 15242 / JCM 11007 / NBRC 100824 / MB4) (Thermoanaerobacter tengcongensis).